Here is an 883-residue protein sequence, read N- to C-terminus: Phosphoenolpyruvate carboxylase (883 aa).

Active-site residues include H138 and K546.

It belongs to the PEPCase type 1 family. The cofactor is Mg(2+).

It catalyses the reaction oxaloacetate + phosphate = phosphoenolpyruvate + hydrogencarbonate. Its function is as follows. Forms oxaloacetate, a four-carbon dicarboxylic acid source for the tricarboxylic acid cycle. The sequence is that of Phosphoenolpyruvate carboxylase from Salmonella schwarzengrund (strain CVM19633).